Consider the following 214-residue polypeptide: MENVGDGSAAAPVDSYRLTEEIQLEKNKKEMLQMSTFELKNTIAELEQRLNSVEDEGNEWKTRYETQIELNKQLERQIYILREKSENIRGNPTDRLSSIRSLDQMPVGALNQFVKHLDDEKILLENQLKNFELRIEQEAKAYYKVNNERRMYISEIAQTSVTQEAAKKQQSDPAHATREKPAFKAKYNGLAKRRTMTKRRGGMTKGSHPSNMKH.

Residues 30 to 144 (EMLQMSTFEL…IEQEAKAYYK (115 aa)) adopt a coiled-coil conformation. The interval 161–214 (VTQEAAKKQQSDPAHATREKPAFKAKYNGLAKRRTMTKRRGGMTKGSHPSNMKH) is disordered. Positions 165 to 182 (AAKKQQSDPAHATREKPA) are enriched in basic and acidic residues. Basic residues predominate over residues 191–202 (AKRRTMTKRRGG).

Belongs to the CCDC169 family.

This chain is Coiled-coil domain-containing protein 169 (ccdc169), found in Xenopus laevis (African clawed frog).